The primary structure comprises 488 residues: Glycogen synthase (488 aa).

Position 20 (R20) interacts with ADP-alpha-D-glucose.

This sequence belongs to the glycosyltransferase 1 family. Bacterial/plant glycogen synthase subfamily.

The enzyme catalyses [(1-&gt;4)-alpha-D-glucosyl](n) + ADP-alpha-D-glucose = [(1-&gt;4)-alpha-D-glucosyl](n+1) + ADP + H(+). It functions in the pathway glycan biosynthesis; glycogen biosynthesis. In terms of biological role, synthesizes alpha-1,4-glucan chains using ADP-glucose. The protein is Glycogen synthase of Chlorobaculum parvum (strain DSM 263 / NCIMB 8327) (Chlorobium vibrioforme subsp. thiosulfatophilum).